Consider the following 115-residue polypeptide: Nucleoid-associated protein Npun_F0448 (115 aa).

This sequence belongs to the YbaB/EbfC family. As to quaternary structure, homodimer.

It is found in the cytoplasm. The protein resides in the nucleoid. In terms of biological role, binds to DNA and alters its conformation. May be involved in regulation of gene expression, nucleoid organization and DNA protection. This Nostoc punctiforme (strain ATCC 29133 / PCC 73102) protein is Nucleoid-associated protein Npun_F0448.